Consider the following 351-residue polypeptide: Palmitoyltransferase spe-10 (351 aa).

The next 4 helical transmembrane spans lie at 21–43 (TGWI…LWWS), 60–80 (IQAT…MWSL), 198–218 (YFLL…LTSL), and 241–261 (LFSF…LIIF). The DHHC domain maps to 154–204 (KYCYECGHIKPDRARHCSSCGKCCIKYDHHCPWINMCVTHVNYKYFLLYII).

This sequence belongs to the DHHC palmitoyltransferase family. In terms of tissue distribution, expressed during spermatogenesis in budding and budded spermatids.

The protein localises to the membrane. It catalyses the reaction L-cysteinyl-[protein] + hexadecanoyl-CoA = S-hexadecanoyl-L-cysteinyl-[protein] + CoA. In terms of biological role, involved in spermatogenesis, specifically in the morphogenesis of fibrous body-membranous organelles (FB-MO), which are Golgi-derived organelles used for transporting sperm-specific components, in spermatocytes and in their localization into budding spermatids. Required for the proper formation of spermatids and spermatozoa. The polypeptide is Palmitoyltransferase spe-10 (Caenorhabditis elegans).